A 573-amino-acid polypeptide reads, in one-letter code: Amino-acid permease inda1 (573 aa).

11 consecutive transmembrane segments (helical) span residues 72-92, 99-117, 176-200, 212-229, 257-280, 296-315, 351-371, 398-415, 425-444, 470-494, and 511-527; these read MIAI…GALA, LFVD…VYAL, ITTA…ALGY, LAAT…VLGG, GFCS…LAAA, VFWR…GLLI, FMNL…VYGG, LPSV…YVSL, WLLA…VCLA, VYGS…AIAA, and YLAA…GWLW.

This sequence belongs to the amino acid-polyamine-organocation (APC) superfamily.

The protein localises to the membrane. This Hypocrea atroviridis (Trichoderma atroviride) protein is Amino-acid permease inda1 (inda1).